A 265-amino-acid polypeptide reads, in one-letter code: Small ribosomal subunit protein uS2 (265 aa).

The segment at 231–265 (VEEEYEDYEGAEDDYEYDETEYTDSVIPDDEEEAE) is disordered.

Belongs to the universal ribosomal protein uS2 family.

This is Small ribosomal subunit protein uS2 from Trichormus variabilis (strain ATCC 29413 / PCC 7937) (Anabaena variabilis).